The chain runs to 198 residues: Peptidyl-tRNA hydrolase (198 aa).

Position 15 (Tyr15) interacts with tRNA. Residue His20 is the Proton acceptor of the active site. TRNA is bound by residues Phe65, Asn67, and Asn113.

The protein belongs to the PTH family. As to quaternary structure, monomer.

The protein localises to the cytoplasm. The catalysed reaction is an N-acyl-L-alpha-aminoacyl-tRNA + H2O = an N-acyl-L-amino acid + a tRNA + H(+). In terms of biological role, hydrolyzes ribosome-free peptidyl-tRNAs (with 1 or more amino acids incorporated), which drop off the ribosome during protein synthesis, or as a result of ribosome stalling. Its function is as follows. Catalyzes the release of premature peptidyl moieties from peptidyl-tRNA molecules trapped in stalled 50S ribosomal subunits, and thus maintains levels of free tRNAs and 50S ribosomes. In Ehrlichia chaffeensis (strain ATCC CRL-10679 / Arkansas), this protein is Peptidyl-tRNA hydrolase.